Consider the following 480-residue polypeptide: F-box/LRR-repeat protein 14 (480 aa).

An F-box domain is found at 11 to 58 (DRQMDELPDHLVWDILSKLHTTDDRNSLSLSCKRFFSLDNEQRYSLRI). LRR repeat units follow at residues 61–86 (GLVP…EIIY), 94–119 (GKQV…TLSF), 120–144 (CTFI…KLNF), 145–170 (APRI…HLIR), 171–196 (CLNV…CIKN), 197–222 (CRAI…QFEV), 229–257 (MKVY…SLGN), 258–283 (CIIA…HLDM), 284–309 (CTGV…SLRV), 322–347 (TLRL…KISF), 355–379 (LFSF…SLDH), 380–404 (VCVF…ELVH), 405–429 (CQEV…KLSK), 430–454 (CLGV…VVED), and 455–480 (CPQV…SWMY).

This chain is F-box/LRR-repeat protein 14 (FBL14), found in Arabidopsis thaliana (Mouse-ear cress).